A 330-amino-acid polypeptide reads, in one-letter code: Ketol-acid reductoisomerase (NADP(+)) (330 aa).

A KARI N-terminal Rossmann domain is found at 1–181 (MKMYYESDVN…GFTKAGVIET (181 aa)). NADP(+)-binding positions include 24–27 (YGSQ), Arg-47, Ser-52, and 82–85 (DEIQ). The active site involves His-107. Gly-133 is a binding site for NADP(+). The region spanning 182 to 327 (TFKEETETDL…ERLRKACGLQ (146 aa)) is the KARI C-terminal knotted domain. Mg(2+) contacts are provided by Asp-190, Glu-194, Glu-226, and Glu-230. Ser-251 contributes to the substrate binding site.

It belongs to the ketol-acid reductoisomerase family. Requires Mg(2+) as cofactor.

It catalyses the reaction (2R)-2,3-dihydroxy-3-methylbutanoate + NADP(+) = (2S)-2-acetolactate + NADPH + H(+). It carries out the reaction (2R,3R)-2,3-dihydroxy-3-methylpentanoate + NADP(+) = (S)-2-ethyl-2-hydroxy-3-oxobutanoate + NADPH + H(+). It functions in the pathway amino-acid biosynthesis; L-isoleucine biosynthesis; L-isoleucine from 2-oxobutanoate: step 2/4. It participates in amino-acid biosynthesis; L-valine biosynthesis; L-valine from pyruvate: step 2/4. Involved in the biosynthesis of branched-chain amino acids (BCAA). Catalyzes an alkyl-migration followed by a ketol-acid reduction of (S)-2-acetolactate (S2AL) to yield (R)-2,3-dihydroxy-isovalerate. In the isomerase reaction, S2AL is rearranged via a Mg-dependent methyl migration to produce 3-hydroxy-3-methyl-2-ketobutyrate (HMKB). In the reductase reaction, this 2-ketoacid undergoes a metal-dependent reduction by NADPH to yield (R)-2,3-dihydroxy-isovalerate. The sequence is that of Ketol-acid reductoisomerase (NADP(+)) from Methanobrevibacter smithii (strain ATCC 35061 / DSM 861 / OCM 144 / PS).